The sequence spans 324 residues: Coproporphyrin III ferrochelatase (324 aa).

The Fe(2+) site is built by His-184 and Glu-266.

The protein belongs to the ferrochelatase family.

The protein resides in the cytoplasm. It carries out the reaction Fe-coproporphyrin III + 2 H(+) = coproporphyrin III + Fe(2+). Its pathway is porphyrin-containing compound metabolism; protoheme biosynthesis. Involved in coproporphyrin-dependent heme b biosynthesis. Catalyzes the insertion of ferrous iron into coproporphyrin III to form Fe-coproporphyrin III. The sequence is that of Coproporphyrin III ferrochelatase from Lactiplantibacillus plantarum (strain ATCC BAA-793 / NCIMB 8826 / WCFS1) (Lactobacillus plantarum).